Consider the following 425-residue polypeptide: CDP-diacylglycerol--serine O-phosphatidyltransferase 1 (425 aa).

Over residues 1-16 the composition is skewed to basic and acidic residues; sequence MEPNGYRKERRKEQHL. The tract at residues 1-23 is disordered; that stretch reads MEPNGYRKERRKEQHLGRMNGGG. 9 consecutive transmembrane segments (helical) span residues 42–62, 79–99, 105–125, 197–217, 227–247, 296–316, 321–341, 361–381, and 390–410; these read TISL…ALDP, WAMI…TVLI, IWRL…FLLF, PLLW…RHML, SIVL…MYTV, FIQV…TFFL, WIPP…LIAI, GAFC…CIKF, and MPLW…AFLL.

It belongs to the CDP-alcohol phosphatidyltransferase class-I family. Expressed in trichomes, leaf veins and root vasculature.

It localises to the endoplasmic reticulum membrane. Its subcellular location is the nucleus envelope. It catalyses the reaction a CDP-1,2-diacyl-sn-glycerol + L-serine = a 1,2-diacyl-sn-glycero-3-phospho-L-serine + CMP + H(+). Its pathway is phospholipid metabolism; phosphatidylethanolamine biosynthesis; phosphatidylethanolamine from CDP-diacylglycerol: step 1/2. Catalyzes a base-exchange reaction in which the polar head group of phosphatidylethanolamine (PE) or phosphatidylcholine (PC) is replaced by L-serine. Is essential for phosphatidylserine (PS) biosynthesis and PE seems to be the most plausible substrate. Plays an important role in microspore maturation. The polypeptide is CDP-diacylglycerol--serine O-phosphatidyltransferase 1 (PSS1) (Arabidopsis thaliana (Mouse-ear cress)).